A 228-amino-acid polypeptide reads, in one-letter code: Uracil-DNA glycosylase (228 aa).

The active-site Proton acceptor is Asp64.

It belongs to the uracil-DNA glycosylase (UDG) superfamily. UNG family.

Its subcellular location is the cytoplasm. It carries out the reaction Hydrolyzes single-stranded DNA or mismatched double-stranded DNA and polynucleotides, releasing free uracil.. Excises uracil residues from the DNA which can arise as a result of misincorporation of dUMP residues by DNA polymerase or due to deamination of cytosine. This is Uracil-DNA glycosylase from Yersinia pseudotuberculosis serotype O:1b (strain IP 31758).